A 303-amino-acid chain; its full sequence is Glycine--tRNA ligase alpha subunit (303 aa).

It belongs to the class-II aminoacyl-tRNA synthetase family. In terms of assembly, tetramer of two alpha and two beta subunits.

The protein localises to the cytoplasm. The enzyme catalyses tRNA(Gly) + glycine + ATP = glycyl-tRNA(Gly) + AMP + diphosphate. This chain is Glycine--tRNA ligase alpha subunit, found in Klebsiella pneumoniae subsp. pneumoniae (strain ATCC 700721 / MGH 78578).